The primary structure comprises 332 residues: Fructose-1,6-bisphosphatase class 1 (332 aa).

Residues glutamate 89, aspartate 110, leucine 112, and aspartate 113 each coordinate Mg(2+). Substrate contacts are provided by residues 113–116 (DGSS), asparagine 206, tyrosine 239, 257–259 (YLY), and lysine 269. Glutamate 275 serves as a coordination point for Mg(2+).

Belongs to the FBPase class 1 family. In terms of assembly, homotetramer. Mg(2+) is required as a cofactor.

The protein localises to the cytoplasm. The enzyme catalyses beta-D-fructose 1,6-bisphosphate + H2O = beta-D-fructose 6-phosphate + phosphate. It participates in carbohydrate biosynthesis; gluconeogenesis. This Salmonella gallinarum (strain 287/91 / NCTC 13346) protein is Fructose-1,6-bisphosphatase class 1.